A 788-amino-acid polypeptide reads, in one-letter code: Integrin beta-6 (788 aa).

Positions 1 to 21 are cleaved as a signal peptide; sequence MGIELLCLFFLFLGRNDHVQG. The PSI domain maps to 22–71; the sequence is GCALGGAETCEDCLLIGPQCAWCAQENFTHPSGVGERCDTPANLLAKGCQ. Residues 22-709 are Extracellular-facing; sequence GCALGGAETC…KDCPKPPNIP (688 aa). Disulfide bonds link cysteine 23–cysteine 41, cysteine 31–cysteine 454, cysteine 34–cysteine 59, cysteine 44–cysteine 70, cysteine 197–cysteine 204, cysteine 252–cysteine 293, cysteine 394–cysteine 406, cysteine 426–cysteine 452, cysteine 456–cysteine 476, cysteine 467–cysteine 479, cysteine 481–cysteine 490, cysteine 492–cysteine 519, cysteine 502–cysteine 517, cysteine 511–cysteine 522, cysteine 524–cysteine 537, cysteine 539–cysteine 560, cysteine 544–cysteine 558, cysteine 552–cysteine 563, and cysteine 565–cysteine 574. N-linked (GlcNAc...) asparagine glycosylation is found at asparagine 48 and asparagine 97. Positions 131–371 constitute a VWFA domain; it reads YPVDLYYLMD…QLIISAYEEL (241 aa). The Mg(2+) site is built by aspartate 140, serine 142, and serine 144. Residues serine 144, aspartate 147, aspartate 148, and glutamate 179 each coordinate Ca(2+). Residues asparagine 235, aspartate 237, proline 239, and glutamate 240 each coordinate Ca(2+). Glutamate 240 contacts Mg(2+). N-linked (GlcNAc...) asparagine glycosylation is present at asparagine 260. Residues aspartate 271 and lysine 355 each coordinate Ca(2+). 2 N-linked (GlcNAc...) asparagine glycosylation sites follow: asparagine 387 and asparagine 396. I-EGF domains lie at 456–491, 492–538, 539–575, and 576–615; these read CQKE…PRCE, CGED…PYCQ, CDNF…EYCN, and CTTS…PTCE. N-linked (GlcNAc...) asparagine glycosylation is found at asparagine 463 and asparagine 471. Asparagine 541 carries N-linked (GlcNAc...) asparagine glycosylation. N-linked (GlcNAc...) asparagine glycosylation occurs at asparagine 575. 9 disulfides stabilise this stretch: cysteine 576-cysteine 599, cysteine 583-cysteine 597, cysteine 591-cysteine 602, cysteine 604-cysteine 614, cysteine 617-cysteine 620, cysteine 624-cysteine 670, cysteine 630-cysteine 649, cysteine 633-cysteine 645, and cysteine 678-cysteine 702. Residues 710–730 traverse the membrane as a helical segment; it reads MIMLGVSLAILLIGVVLLCIW. The tract at residues 731 to 758 is interaction with HAX1; sequence KLLVSFHDRKEVAKFEAERSKAKWQTGT. Residues 731 to 788 lie on the Cytoplasmic side of the membrane; sequence KLLVSFHDRKEVAKFEAERSKAKWQTGTNPLYRGSTSTFKNVTYKHREKQKVDLSTDC.

It belongs to the integrin beta chain family. As to quaternary structure, heterodimer of an alpha and a beta subunit. Interacts with FLNB. Interacts with HAX1. ITGAV:ITGB6 interacts with FBN1. ITGAV:ITGB6 interacts with TGFB1. In terms of assembly, (Microbial infection) Integrin ITGAV:ITGB6 interacts with coxsackievirus A9, coxsackievirus B1 capsid proteins. (Microbial infection) Integrin ITGAV:ITGB6 interacts with herpes simplex virus-1/HHV-1 gH:gL proteins.

It localises to the cell membrane. It is found in the cell junction. The protein localises to the focal adhesion. Its function is as follows. Integrin alpha-V:beta-6 (ITGAV:ITGB6) is a receptor for fibronectin and cytotactin. It recognizes the sequence R-G-D in its ligands. Internalization of integrin alpha-V/beta-6 via clathrin-mediated endocytosis promotes carcinoma cell invasion. ITGAV:ITGB6 acts as a receptor for fibrillin-1 (FBN1) and mediates R-G-D-dependent cell adhesion to FBN1. Integrin alpha-V:beta-6 (ITGAV:ITGB6) mediates R-G-D-dependent release of transforming growth factor beta-1 (TGF-beta-1) from regulatory Latency-associated peptide (LAP), thereby playing a key role in TGF-beta-1 activation. Functionally, (Microbial infection) Integrin ITGAV:ITGB6 acts as a receptor for Coxsackievirus A9 and Coxsackievirus B1. (Microbial infection) Integrin ITGAV:ITGB6 acts as a receptor for Herpes simplex virus-1/HHV-1. This chain is Integrin beta-6 (ITGB6), found in Homo sapiens (Human).